The primary structure comprises 248 residues: 5'-nucleotidase SurE (248 aa).

Residues Asp8, Asp9, Ser39, and Asn91 each contribute to the a divalent metal cation site.

It belongs to the SurE nucleotidase family. Requires a divalent metal cation as cofactor.

It localises to the cytoplasm. It carries out the reaction a ribonucleoside 5'-phosphate + H2O = a ribonucleoside + phosphate. Functionally, nucleotidase that shows phosphatase activity on nucleoside 5'-monophosphates. In Marinomonas sp. (strain MWYL1), this protein is 5'-nucleotidase SurE.